Consider the following 188-residue polypeptide: Elongation factor P (188 aa).

It belongs to the elongation factor P family.

It localises to the cytoplasm. The protein operates within protein biosynthesis; polypeptide chain elongation. Functionally, involved in peptide bond synthesis. Stimulates efficient translation and peptide-bond synthesis on native or reconstituted 70S ribosomes in vitro. Probably functions indirectly by altering the affinity of the ribosome for aminoacyl-tRNA, thus increasing their reactivity as acceptors for peptidyl transferase. The polypeptide is Elongation factor P (Parabacteroides distasonis (strain ATCC 8503 / DSM 20701 / CIP 104284 / JCM 5825 / NCTC 11152)).